The following is a 461-amino-acid chain: Argininosuccinate lyase (461 aa).

2-(N(omega)-L-arginino)succinate contacts are provided by S28, N115, and T160. H161 serves as the catalytic Proton acceptor. Catalysis depends on S282, which acts as the Proton donor. The 2-(N(omega)-L-arginino)succinate site is built by N290, Y322, Q327, and K330.

Belongs to the lyase 1 family. Argininosuccinate lyase subfamily. Homotetramer.

It carries out the reaction 2-(N(omega)-L-arginino)succinate = fumarate + L-arginine. Its pathway is amino-acid biosynthesis; L-arginine biosynthesis; L-arginine from L-ornithine and carbamoyl phosphate: step 3/3. This chain is Argininosuccinate lyase (arg7), found in Schizosaccharomyces pombe (strain 972 / ATCC 24843) (Fission yeast).